Here is a 445-residue protein sequence, read N- to C-terminus: Argininosuccinate synthase (445 aa).

Residues Ala17–Ser25 and Ala43 contribute to the ATP site. An L-citrulline-binding site is contributed by Tyr99. ATP contacts are provided by Gly129 and Thr131. Positions 131, 135, and 136 each coordinate L-aspartate. An L-citrulline-binding site is contributed by Asn135. Asp136 is a binding site for ATP. The L-citrulline site is built by Arg139 and Ser192. Asp194 lines the ATP pocket. Residues Thr201, Glu203, and Glu280 each coordinate L-citrulline.

It belongs to the argininosuccinate synthase family. Type 2 subfamily. Homotetramer.

The protein localises to the cytoplasm. It catalyses the reaction L-citrulline + L-aspartate + ATP = 2-(N(omega)-L-arginino)succinate + AMP + diphosphate + H(+). The protein operates within amino-acid biosynthesis; L-arginine biosynthesis; L-arginine from L-ornithine and carbamoyl phosphate: step 2/3. This chain is Argininosuccinate synthase, found in Burkholderia cenocepacia (strain ATCC BAA-245 / DSM 16553 / LMG 16656 / NCTC 13227 / J2315 / CF5610) (Burkholderia cepacia (strain J2315)).